The chain runs to 393 residues: Chorismate synthase (393 aa).

The NADP(+) site is built by Arg-40 and Arg-46. FMN is bound by residues 129–131 (RAS), 251–252 (QA), Gly-301, 316–320 (KPIST), and Arg-342.

This sequence belongs to the chorismate synthase family. As to quaternary structure, homotetramer. The cofactor is FMNH2.

It carries out the reaction 5-O-(1-carboxyvinyl)-3-phosphoshikimate = chorismate + phosphate. It participates in metabolic intermediate biosynthesis; chorismate biosynthesis; chorismate from D-erythrose 4-phosphate and phosphoenolpyruvate: step 7/7. Its function is as follows. Catalyzes the anti-1,4-elimination of the C-3 phosphate and the C-6 proR hydrogen from 5-enolpyruvylshikimate-3-phosphate (EPSP) to yield chorismate, which is the branch point compound that serves as the starting substrate for the three terminal pathways of aromatic amino acid biosynthesis. This reaction introduces a second double bond into the aromatic ring system. This chain is Chorismate synthase, found in Koribacter versatilis (strain Ellin345).